The chain runs to 242 residues: Lysosomal membrane ascorbate-dependent ferrireductase CYB561A3 (242 aa).

Residues 1–7 (MVSGRFY) are Cytoplasmic-facing. The helical transmembrane segment at 8-28 (LSCLLLGSLGSMCILFTIYWM) threads the bilayer. Positions 12–219 (LLGSLGSMCI…FGLLVLYILL (208 aa)) constitute a Cytochrome b561 domain. The Lumenal segment spans residues 29–45 (QYWRGGFAWNGSIYMFN). Residue N38 is glycosylated (N-linked (GlcNAc...) asparagine). The chain crosses the membrane as a helical span at residues 46-66 (WHPVLMVAGMVVFYGGASLVY). Residues H47 and R67 each contribute to the heme b site. At 67–83 (RLPQSWVGPKLPWKLLH) the chain is on the cytoplasmic side. Residues K76 and K80 each coordinate L-ascorbate. H83 is a binding site for heme b. A helical transmembrane segment spans residues 84 to 104 (AALHLMAFVLTVVGLVAVFTF). Topologically, residues 105 to 119 (HNHGRTANLYSLHSW) are lumenal. Heme b is bound by residues 112–115 (NLYS) and H117. Residues 120–140 (LGITTVFLFACQWFLGFAVFL) traverse the membrane as a helical segment. At 141 to 154 (LPWASMWLRSLLKP) the chain is on the cytoplasmic side. Position 149 (R149) interacts with L-ascorbate. A helical membrane pass occupies residues 155–175 (IHVFFGAAILSLSIASVISGI). Heme b-binding residues include H156 and E177. Residues 176 to 202 (NEKLFFSLKNTTRPYHSLPSEAVFANS) are Lumenal-facing. A helical transmembrane segment spans residues 203–223 (TGMLVVAFGLLVLYILLASSW). K224 is a heme b binding site. At 224–242 (KRPEPGILTDRQPLLHDGE) the chain is on the cytoplasmic side.

In terms of assembly, homodimer. Requires heme b as cofactor. Post-translationally, N-glycosylated.

It is found in the late endosome membrane. Its subcellular location is the lysosome membrane. It catalyses the reaction Fe(3+)(out) + L-ascorbate(in) = monodehydro-L-ascorbate radical(in) + Fe(2+)(out) + H(+). Transmembrane reductase that uses ascorbate as an electron donor in the cytoplasm and transfers electrons across membranes to reduce iron cations Fe(3+) into Fe(2+) in the lumen of the late endosome and lysosome. Reduced iron can then be extruded from the late endosome and lysosome to the cytoplasm by divalent metal-specific transporters. It is therefore most probably involved in endosomal and lysosomal cellular iron homeostasis. This is Lysosomal membrane ascorbate-dependent ferrireductase CYB561A3 from Homo sapiens (Human).